The chain runs to 318 residues: 1-aminocyclopropane-1-carboxylate oxidase (318 aa).

One can recognise a Fe2OG dioxygenase domain in the interval 151-251 (PTFGTKVSNY…RMSIASFYNP (101 aa)). Fe cation contacts are provided by H175, D177, and H232.

The protein belongs to the iron/ascorbate-dependent oxidoreductase family. Fe cation is required as a cofactor.

It carries out the reaction 1-aminocyclopropane-1-carboxylate + L-ascorbate + O2 = ethene + L-dehydroascorbate + hydrogen cyanide + CO2 + 2 H2O. It participates in alkene biosynthesis; ethylene biosynthesis via S-adenosyl-L-methionine; ethylene from S-adenosyl-L-methionine: step 2/2. The protein is 1-aminocyclopropane-1-carboxylate oxidase (ACO) of Dendrobium crumenatum (Tropical pigeon orchid).